Here is a 347-residue protein sequence, read N- to C-terminus: UDP-3-O-acylglucosamine N-acyltransferase (347 aa).

Residue H248 is the Proton acceptor of the active site.

This sequence belongs to the transferase hexapeptide repeat family. LpxD subfamily. Homotrimer.

It carries out the reaction a UDP-3-O-[(3R)-3-hydroxyacyl]-alpha-D-glucosamine + a (3R)-hydroxyacyl-[ACP] = a UDP-2-N,3-O-bis[(3R)-3-hydroxyacyl]-alpha-D-glucosamine + holo-[ACP] + H(+). It functions in the pathway bacterial outer membrane biogenesis; LPS lipid A biosynthesis. Its function is as follows. Catalyzes the N-acylation of UDP-3-O-acylglucosamine using 3-hydroxyacyl-ACP as the acyl donor. Is involved in the biosynthesis of lipid A, a phosphorylated glycolipid that anchors the lipopolysaccharide to the outer membrane of the cell. In Parasynechococcus marenigrum (strain WH8102), this protein is UDP-3-O-acylglucosamine N-acyltransferase.